Reading from the N-terminus, the 199-residue chain is NAD(P)H dehydrogenase (quinone) (199 aa).

The Flavodoxin-like domain maps to 4–190; the sequence is VLVLYYSAYG…AGARYQGRMI (187 aa). FMN-binding positions include 10-15 and 78-80; these read SAYGHI and TRF. Tyr-12 provides a ligand contact to NAD(+). Trp-98 contributes to the substrate binding site. FMN is bound by residues 113–119 and His-134; that span reads SSATQHG.

The protein belongs to the WrbA family. The cofactor is FMN.

The enzyme catalyses a quinone + NADH + H(+) = a quinol + NAD(+). The catalysed reaction is a quinone + NADPH + H(+) = a quinol + NADP(+). The sequence is that of NAD(P)H dehydrogenase (quinone) from Nitrobacter winogradskyi (strain ATCC 25391 / DSM 10237 / CIP 104748 / NCIMB 11846 / Nb-255).